The primary structure comprises 291 residues: G1/S-specific cyclin-D2 (291 aa).

The interval 261-291 (TRQQTQQRNSSKSVDELDQASTPTDVQDINL) is disordered. The span at 279-291 (QASTPTDVQDINL) shows a compositional bias: polar residues. At Thr-282 the chain carries Phosphothreonine.

It belongs to the cyclin family. Cyclin D subfamily. Interacts with the cdk4 and cdk6 protein kinases to form a serine/threonine kinase holoenzyme complex. The cyclin subunit imparts substrate specificity to the complex. Post-translationally, phosphorylation at Thr-282 by MAP kinases is required for ubiquitination and degradation by the DCX(AMBRA1) complex. Ubiquitinated by the DCX(AMBRA1) complex during the transition from G1 to S cell phase, leading to its degradation: ubiquitination is dependent on Thr-282 phosphorylation. The DCX(AMBRA1) complex represents the major regulator of CCND2 stability during the G1/S transition.

The protein localises to the nucleus. It is found in the cytoplasm. Its subcellular location is the nucleus membrane. In terms of biological role, regulatory component of the cyclin D2-CDK4 (DC) complex that phosphorylates and inhibits members of the retinoblastoma (RB) protein family including RB1 and regulates the cell-cycle during G(1)/S transition. Phosphorylation of RB1 allows dissociation of the transcription factor E2F from the RB/E2F complex and the subsequent transcription of E2F target genes which are responsible for the progression through the G(1) phase. Hypophosphorylates RB1 in early G(1) phase. Cyclin D-CDK4 complexes are major integrators of various mitogenenic and antimitogenic signals. This chain is G1/S-specific cyclin-D2 (ccnd2), found in Xenopus laevis (African clawed frog).